Reading from the N-terminus, the 433-residue chain is Homogentisate 1,2-dioxygenase (433 aa).

Catalysis depends on His-288, which acts as the Proton acceptor. Residues His-331 and Glu-337 each coordinate Fe cation. Residues Tyr-346 and His-367 each contribute to the homogentisate site. Position 367 (His-367) interacts with Fe cation.

It belongs to the homogentisate dioxygenase family. As to quaternary structure, hexamer; dimer of trimers. The cofactor is Fe cation.

The enzyme catalyses homogentisate + O2 = 4-maleylacetoacetate + H(+). The protein operates within amino-acid degradation; L-phenylalanine degradation; acetoacetate and fumarate from L-phenylalanine: step 4/6. In terms of biological role, involved in the catabolism of homogentisate (2,5-dihydroxyphenylacetate or 2,5-OH-PhAc), a central intermediate in the degradation of phenylalanine and tyrosine. Catalyzes the oxidative ring cleavage of the aromatic ring of homogentisate to yield maleylacetoacetate. The protein is Homogentisate 1,2-dioxygenase of Pseudomonas entomophila (strain L48).